We begin with the raw amino-acid sequence, 461 residues long: Photosystem II CP43 reaction center protein (461 aa).

The propeptide occupies 1–2; sequence ME. Residue Thr3 is modified to N-acetylthreonine. Thr3 is subject to Phosphothreonine. Helical transmembrane passes span 57-81, 122-143, 166-188, 243-263, and 279-300; these read LFEV…PHLA, LLGP…KDRN, KASY…RKIT, KPFA…LSYS, and WFNN…ASQA. Position 355 (Glu355) interacts with [CaMn4O5] cluster. A helical membrane pass occupies residues 435–459; that stretch reads RARAAAAGFEKGIDRDFEPVLSMTP.

This sequence belongs to the PsbB/PsbC family. PsbC subfamily. In terms of assembly, PSII is composed of 1 copy each of membrane proteins PsbA, PsbB, PsbC, PsbD, PsbE, PsbF, PsbH, PsbI, PsbJ, PsbK, PsbL, PsbM, PsbT, PsbX, PsbY, PsbZ, Psb30/Ycf12, at least 3 peripheral proteins of the oxygen-evolving complex and a large number of cofactors. It forms dimeric complexes. Requires Binds multiple chlorophylls and provides some of the ligands for the Ca-4Mn-5O cluster of the oxygen-evolving complex. It may also provide a ligand for a Cl- that is required for oxygen evolution. PSII binds additional chlorophylls, carotenoids and specific lipids. as cofactor.

Its subcellular location is the plastid. It is found in the chloroplast thylakoid membrane. In terms of biological role, one of the components of the core complex of photosystem II (PSII). It binds chlorophyll and helps catalyze the primary light-induced photochemical processes of PSII. PSII is a light-driven water:plastoquinone oxidoreductase, using light energy to abstract electrons from H(2)O, generating O(2) and a proton gradient subsequently used for ATP formation. This Lotus japonicus (Lotus corniculatus var. japonicus) protein is Photosystem II CP43 reaction center protein.